The primary structure comprises 244 residues: Protein crossbronx (244 aa).

The 157-residue stretch at Gln-20–Asp-176 folds into the UBC core domain.

It belongs to the ubiquitin-conjugating enzyme family. FTS subfamily.

The sequence is that of Protein crossbronx (cbx) from Drosophila yakuba (Fruit fly).